A 90-amino-acid chain; its full sequence is Cell division topological specificity factor (90 aa).

Residues 1–21 are disordered; that stretch reads MAGFWSKIFGNDEKPSSAQTA. Residues 10–21 are compositionally biased toward basic and acidic residues; sequence GNDEKPSSAQTA.

It belongs to the MinE family.

Its function is as follows. Prevents the cell division inhibition by proteins MinC and MinD at internal division sites while permitting inhibition at polar sites. This ensures cell division at the proper site by restricting the formation of a division septum at the midpoint of the long axis of the cell. The protein is Cell division topological specificity factor of Acinetobacter baylyi (strain ATCC 33305 / BD413 / ADP1).